Here is a 103-residue protein sequence, read N- to C-terminus: uncharacterized protein (103 aa).

This is an uncharacterized protein from Caenorhabditis elegans.